A 448-amino-acid polypeptide reads, in one-letter code: MRYLPLTENDRREMLGVIGAKSVDELFRDVPERARREGLVDLPRRQGELEVERMLGRMAAKNTPAASVPFFVGAGAYRHHVPAAVDHLIQRSEFLTSYTPYQPEITQGTLQYLFEFQTQVAMITGMEVANASMYDGATGCGEAVLMAHRVTKRRKAVLSGTLHPQYAAVVQNLSDFADYELEVMPPALPGQAEDILAHIHDDISCVVVQTPGFFGELHDLRPIAEAAHAKGALLIAVVPEILSLGAVTPPGEMGADIVVGEGQSIGNGLNFGGPYVGLFATREKYMRQMPGRLCGETVDADGNRGFVLTLSTREQHIRREKATSNICTNSGLCCLAFTIHMSLLGEEGYKRLARINHAAAVKLAERLAKVPGVEILNQAFFNEFTMRLPKPAAEVVDALVDKGVIGGLPASRLLPGVAEVEDLLIVASTEINTEADRAAYEAALKEVL.

The protein belongs to the GcvP family. N-terminal subunit subfamily. The glycine cleavage system is composed of four proteins: P, T, L and H. In this organism, the P 'protein' is a heterodimer of two subunits.

The catalysed reaction is N(6)-[(R)-lipoyl]-L-lysyl-[glycine-cleavage complex H protein] + glycine + H(+) = N(6)-[(R)-S(8)-aminomethyldihydrolipoyl]-L-lysyl-[glycine-cleavage complex H protein] + CO2. In terms of biological role, the glycine cleavage system catalyzes the degradation of glycine. The P protein binds the alpha-amino group of glycine through its pyridoxal phosphate cofactor; CO(2) is released and the remaining methylamine moiety is then transferred to the lipoamide cofactor of the H protein. The protein is Probable glycine dehydrogenase (decarboxylating) subunit 1 of Parvibaculum lavamentivorans (strain DS-1 / DSM 13023 / NCIMB 13966).